We begin with the raw amino-acid sequence, 207 residues long: Ribosomal RNA small subunit methyltransferase G (207 aa).

S-adenosyl-L-methionine contacts are provided by residues G73, L78, 124 to 125 (VE), and R139.

Belongs to the methyltransferase superfamily. RNA methyltransferase RsmG family.

It is found in the cytoplasm. It carries out the reaction guanosine(527) in 16S rRNA + S-adenosyl-L-methionine = N(7)-methylguanosine(527) in 16S rRNA + S-adenosyl-L-homocysteine. Functionally, specifically methylates the N7 position of guanine in position 527 of 16S rRNA. This chain is Ribosomal RNA small subunit methyltransferase G, found in Escherichia coli O17:K52:H18 (strain UMN026 / ExPEC).